The following is a 307-amino-acid chain: Regulating synaptic membrane exocytosis protein 3 (307 aa).

Residues 86–120 (STETGIAVEMRSRVTRQGSRESTDGSTNSNSSEGT) form a disordered region. Positions 109–119 (DGSTNSNSSEG) are enriched in polar residues. The 119-residue stretch at 155 to 273 (PMGDVHIAIM…DLSAAVTGWY (119 aa)) folds into the C2 domain. Phosphoserine occurs at positions 294 and 297.

In terms of assembly, binds PPFIA3. Does not bind RAB3.

The protein resides in the synapse. In terms of biological role, regulates synaptic membrane exocytosis. The sequence is that of Regulating synaptic membrane exocytosis protein 3 (Rims3) from Mus musculus (Mouse).